Reading from the N-terminus, the 612-residue chain is Alpha-glycerophosphate oxidase (612 aa).

Residue 21–49 (DLLIIGGGITGAGVALQAAASGLDTGLIE) participates in FAD binding. Basic and acidic residues predominate over residues 399-408 (ETSTSEKELD). The disordered stretch occupies residues 399-418 (ETSTSEKELDPSAVSRGSSF).

This sequence belongs to the FAD-dependent glycerol-3-phosphate dehydrogenase family. FAD serves as cofactor.

It is found in the cytoplasm. The catalysed reaction is sn-glycerol 3-phosphate + O2 = dihydroxyacetone phosphate + H2O2. The protein is Alpha-glycerophosphate oxidase (glpO) of Streptococcus pyogenes serotype M1.